The sequence spans 649 residues: Drebrin (649 aa).

A2 bears the N-acetylalanine mark. Positions 3 to 134 (GVSFSGHRLE…DAGAIGQRLS (132 aa)) constitute an ADF-H domain. 2 positions are modified to phosphoserine: S141 and S142. 2 stretches are compositionally biased toward basic and acidic residues: residues 208-236 (QERM…EEHR) and 288-298 (DNPREFFKQQE). 3 disordered regions span residues 208-420 (QERM…PAED), 477-502 (DLWP…PSGT), and 538-620 (EPPA…PPPV). A phosphothreonine mark is found at T331 and T335. The span at 334–348 (PTRSPSDSSTASTPV) shows a compositional bias: polar residues. Phosphoserine is present on residues S337, S339, and S345. The residue at position 346 (T346) is a Phosphothreonine. Pro residues predominate over residues 363–374 (QPPPLPPPPPPA). Residue S416 is modified to Phosphoserine. A Phosphothreonine modification is found at T497. Over residues 582-594 (NGETTQKEGTQAS) the composition is skewed to polar residues. Residue S601 is modified to Phosphoserine.

As to quaternary structure, interacts with RUFY3. Interacts with CXCR4; this interaction is enhanced by antigenic stimulation. Interacts (via ADF-H domain) with ZMYND8 (via N-terminus); the interaction leads to sequestering of ZMYND8 in the cytoplasm. In terms of tissue distribution, expressed in the brain, with expression in the molecular layer of the dentate gyrus, stratum pyramidale, and stratum radiatum of the hippocampus (at protein level). Also expressed in the terminal varicosities distributed along dendritic trees of pyramidal cells in CA4 and CA3 of the hippocampus (at protein level). Expressed in pyramidal cells in CA2, CA1 and the subiculum of the hippocampus (at protein level). Expressed in peripheral blood lymphocytes, including T-cells (at protein level). Expressed in the brain. Expressed in the heart, placenta, lung, skeletal muscle, kidney, pancreas, skin fibroblasts, gingival fibroblasts and bone-derived cells.

The protein resides in the cytoplasm. The protein localises to the cell projection. It localises to the dendrite. Its subcellular location is the cell cortex. It is found in the cell junction. The protein resides in the growth cone. In terms of biological role, actin cytoskeleton-organizing protein that plays a role in the formation of cell projections. Required for actin polymerization at immunological synapses (IS) and for the recruitment of the chemokine receptor CXCR4 to IS. Plays a role in dendritic spine morphogenesis and organization, including the localization of the dopamine receptor DRD1 to the dendritic spines. Involved in memory-related synaptic plasticity in the hippocampus. This chain is Drebrin (DBN1), found in Homo sapiens (Human).